The chain runs to 227 residues: MKSFPLPIKAVVIDLDGTLLNTAPDLAHAAELMMAELGRPCPSLETISTYIGNGVSRLVKRVLTGEMDAEPDPALFAQAIASYQKHYGEHVSLHSRPFDGVVEGLQAFKAMGLHMACITNKAEQFTVPLLKGTGLYDYFELILSGDTLPKRKPDPLPLLHACEVFGVAPAELLLIGDSLNDTQAARAAGCPVFCVPYGYNRGRPVTELDLDAVVPSLAEAALMVTKA.

Aspartate 14 functions as the Nucleophile in the catalytic mechanism. Mg(2+) is bound by residues aspartate 14, aspartate 16, and aspartate 177.

It belongs to the HAD-like hydrolase superfamily. CbbY/CbbZ/Gph/YieH family. The cofactor is Mg(2+).

It catalyses the reaction 2-phosphoglycolate + H2O = glycolate + phosphate. Its pathway is organic acid metabolism; glycolate biosynthesis; glycolate from 2-phosphoglycolate: step 1/1. Specifically catalyzes the dephosphorylation of 2-phosphoglycolate. Is involved in the dissimilation of the intracellular 2-phosphoglycolate formed during the DNA repair of 3'-phosphoglycolate ends, a major class of DNA lesions induced by oxidative stress. The chain is Phosphoglycolate phosphatase from Thiobacillus denitrificans (strain ATCC 25259 / T1).